The following is a 309-amino-acid chain: Mitochondrial fission regulator 1-like (309 aa).

Residues 189–221 (DVTEEDEEEEEEEDREEEEEDVSELVPDPMPPV) form a disordered region. Positions 190-211 (VTEEDEEEEEEEDREEEEEDVS) are enriched in acidic residues. Ser253 carries the phosphoserine modification.

Belongs to the MTFR1 family.

It is found in the mitochondrion outer membrane. In terms of biological role, mitochondrial protein required for adaptation of miochondrial dynamics to metabolic changes. Regulates mitochondrial morphology at steady state and mediates AMPK-dependent stress-induced mitochondrial fragmentation via the control of OPA1 levels. The sequence is that of Mitochondrial fission regulator 1-like (mtfr1l) from Danio rerio (Zebrafish).